Consider the following 299-residue polypeptide: Bifunctional protein FolD (299 aa).

Residues 168-170 (GRS), Ser-193, and Ile-234 each bind NADP(+).

The protein belongs to the tetrahydrofolate dehydrogenase/cyclohydrolase family. Homodimer.

The catalysed reaction is (6R)-5,10-methylene-5,6,7,8-tetrahydrofolate + NADP(+) = (6R)-5,10-methenyltetrahydrofolate + NADPH. It carries out the reaction (6R)-5,10-methenyltetrahydrofolate + H2O = (6R)-10-formyltetrahydrofolate + H(+). It functions in the pathway one-carbon metabolism; tetrahydrofolate interconversion. Catalyzes the oxidation of 5,10-methylenetetrahydrofolate to 5,10-methenyltetrahydrofolate and then the hydrolysis of 5,10-methenyltetrahydrofolate to 10-formyltetrahydrofolate. In Brucella abortus (strain S19), this protein is Bifunctional protein FolD.